The chain runs to 126 residues: Small ribosomal subunit protein uS13 (126 aa).

Residues 96–126 (PVRGQRTRTNARTRRGSRRTVAGKKKPAAKK) form a disordered region. Over residues 100–126 (QRTRTNARTRRGSRRTVAGKKKPAAKK) the composition is skewed to basic residues.

Belongs to the universal ribosomal protein uS13 family. As to quaternary structure, part of the 30S ribosomal subunit. Forms a loose heterodimer with protein S19. Forms two bridges to the 50S subunit in the 70S ribosome.

Located at the top of the head of the 30S subunit, it contacts several helices of the 16S rRNA. In the 70S ribosome it contacts the 23S rRNA (bridge B1a) and protein L5 of the 50S subunit (bridge B1b), connecting the 2 subunits; these bridges are implicated in subunit movement. Contacts the tRNAs in the A and P-sites. This chain is Small ribosomal subunit protein uS13, found in Thermosynechococcus vestitus (strain NIES-2133 / IAM M-273 / BP-1).